Reading from the N-terminus, the 478-residue chain is SPbeta prophage-derived uncharacterized protein YonD (478 aa).

Residues Ile326–Leu419 are a coiled coil.

The polypeptide is SPbeta prophage-derived uncharacterized protein YonD (yonD) (Bacillus subtilis (strain 168)).